Reading from the N-terminus, the 360-residue chain is Histidinol-phosphate aminotransferase (360 aa).

K222 is subject to N6-(pyridoxal phosphate)lysine.

The protein belongs to the class-II pyridoxal-phosphate-dependent aminotransferase family. Histidinol-phosphate aminotransferase subfamily. Homodimer. Pyridoxal 5'-phosphate is required as a cofactor.

It catalyses the reaction L-histidinol phosphate + 2-oxoglutarate = 3-(imidazol-4-yl)-2-oxopropyl phosphate + L-glutamate. It participates in amino-acid biosynthesis; L-histidine biosynthesis; L-histidine from 5-phospho-alpha-D-ribose 1-diphosphate: step 7/9. In Listeria welshimeri serovar 6b (strain ATCC 35897 / DSM 20650 / CCUG 15529 / CIP 8149 / NCTC 11857 / SLCC 5334 / V8), this protein is Histidinol-phosphate aminotransferase.